Reading from the N-terminus, the 958-residue chain is Glycine dehydrogenase (decarboxylating) 2 (958 aa).

At K707 the chain carries N6-(pyridoxal phosphate)lysine.

This sequence belongs to the GcvP family. In terms of assembly, the glycine cleavage system is composed of four proteins: P, T, L and H. Pyridoxal 5'-phosphate is required as a cofactor.

It carries out the reaction N(6)-[(R)-lipoyl]-L-lysyl-[glycine-cleavage complex H protein] + glycine + H(+) = N(6)-[(R)-S(8)-aminomethyldihydrolipoyl]-L-lysyl-[glycine-cleavage complex H protein] + CO2. The glycine cleavage system catalyzes the degradation of glycine. The P protein binds the alpha-amino group of glycine through its pyridoxal phosphate cofactor; CO(2) is released and the remaining methylamine moiety is then transferred to the lipoamide cofactor of the H protein. In Pseudomonas aeruginosa (strain ATCC 15692 / DSM 22644 / CIP 104116 / JCM 14847 / LMG 12228 / 1C / PRS 101 / PAO1), this protein is Glycine dehydrogenase (decarboxylating) 2 (gcvP2).